Here is a 459-residue protein sequence, read N- to C-terminus: Glycerol-3-phosphate acyltransferase, chloroplastic (459 aa).

A chloroplast-targeting transit peptide spans 1–90; the sequence is MTLTFSSSAA…FNEAAGETPS (90 aa). The short motif at 229–234 is the HXXXXD motif element; it reads HQSEAD.

Belongs to the GPAT/DAPAT family.

The protein localises to the plastid. It is found in the chloroplast stroma. The catalysed reaction is sn-glycerol 3-phosphate + an acyl-CoA = a 1-acyl-sn-glycero-3-phosphate + CoA. The protein operates within phospholipid metabolism; CDP-diacylglycerol biosynthesis; CDP-diacylglycerol from sn-glycerol 3-phosphate: step 1/3. Functionally, esterifies acyl-group from acyl-ACP to the sn-1 position of glycerol-3-phosphate. The enzyme from chilling-resistant plants discriminates against non-fluid palmitic acid and selects oleic acid whereas the enzyme from sensitive plants accepts both fatty acids. This is an oleate-selective acyltransferase. In Arabidopsis thaliana (Mouse-ear cress), this protein is Glycerol-3-phosphate acyltransferase, chloroplastic (ATS1).